A 356-amino-acid chain; its full sequence is Holliday junction branch migration complex subunit RuvB (356 aa).

Residues 4–191 (TDKLATEQRI…FGIVARLEFY (188 aa)) are large ATPase domain (RuvB-L). ATP-binding positions include Leu30, Arg31, Gly72, Lys75, Thr76, Thr77, 138–140 (EDY), Arg181, Tyr191, and Arg228. Thr76 provides a ligand contact to Mg(2+). The segment at 192-262 (DAEQLSRIVR…VADAALAMLD (71 aa)) is small ATPAse domain (RuvB-S). A head domain (RuvB-H) region spans residues 265–356 (PVGFDLMDRK…RDEWDTPDGK (92 aa)). Residues Arg301, Arg320, and Arg325 each coordinate DNA.

It belongs to the RuvB family. In terms of assembly, homohexamer. Forms an RuvA(8)-RuvB(12)-Holliday junction (HJ) complex. HJ DNA is sandwiched between 2 RuvA tetramers; dsDNA enters through RuvA and exits via RuvB. An RuvB hexamer assembles on each DNA strand where it exits the tetramer. Each RuvB hexamer is contacted by two RuvA subunits (via domain III) on 2 adjacent RuvB subunits; this complex drives branch migration. In the full resolvosome a probable DNA-RuvA(4)-RuvB(12)-RuvC(2) complex forms which resolves the HJ.

Its subcellular location is the cytoplasm. The catalysed reaction is ATP + H2O = ADP + phosphate + H(+). Its function is as follows. The RuvA-RuvB-RuvC complex processes Holliday junction (HJ) DNA during genetic recombination and DNA repair, while the RuvA-RuvB complex plays an important role in the rescue of blocked DNA replication forks via replication fork reversal (RFR). RuvA specifically binds to HJ cruciform DNA, conferring on it an open structure. The RuvB hexamer acts as an ATP-dependent pump, pulling dsDNA into and through the RuvAB complex. RuvB forms 2 homohexamers on either side of HJ DNA bound by 1 or 2 RuvA tetramers; 4 subunits per hexamer contact DNA at a time. Coordinated motions by a converter formed by DNA-disengaged RuvB subunits stimulates ATP hydrolysis and nucleotide exchange. Immobilization of the converter enables RuvB to convert the ATP-contained energy into a lever motion, pulling 2 nucleotides of DNA out of the RuvA tetramer per ATP hydrolyzed, thus driving DNA branch migration. The RuvB motors rotate together with the DNA substrate, which together with the progressing nucleotide cycle form the mechanistic basis for DNA recombination by continuous HJ branch migration. Branch migration allows RuvC to scan DNA until it finds its consensus sequence, where it cleaves and resolves cruciform DNA. The chain is Holliday junction branch migration complex subunit RuvB from Burkholderia cenocepacia (strain HI2424).